A 401-amino-acid polypeptide reads, in one-letter code: S-adenosylmethionine synthase (401 aa).

An ATP-binding site is contributed by His-16. A Mg(2+)-binding site is contributed by Asp-18. Glu-44 serves as a coordination point for K(+). L-methionine-binding residues include Glu-57 and Gln-109. A flexible loop region spans residues 109–119 (QSAHIAQGVDA). ATP is bound by residues 174–176 (DAK), Asp-251, 257–258 (RK), Ala-274, and Lys-278. Asp-251 contributes to the L-methionine binding site. Lys-282 is an L-methionine binding site.

Belongs to the AdoMet synthase family. As to quaternary structure, homotetramer; dimer of dimers. Mg(2+) is required as a cofactor. Requires K(+) as cofactor.

It localises to the cytoplasm. It carries out the reaction L-methionine + ATP + H2O = S-adenosyl-L-methionine + phosphate + diphosphate. Its pathway is amino-acid biosynthesis; S-adenosyl-L-methionine biosynthesis; S-adenosyl-L-methionine from L-methionine: step 1/1. Functionally, catalyzes the formation of S-adenosylmethionine (AdoMet) from methionine and ATP. The overall synthetic reaction is composed of two sequential steps, AdoMet formation and the subsequent tripolyphosphate hydrolysis which occurs prior to release of AdoMet from the enzyme. This chain is S-adenosylmethionine synthase, found in Novosphingobium aromaticivorans (strain ATCC 700278 / DSM 12444 / CCUG 56034 / CIP 105152 / NBRC 16084 / F199).